The following is a 73-amino-acid chain: NAD(P)H-quinone oxidoreductase subunit L (73 aa).

2 helical membrane passes run 6–26 (SLIG…LPLL) and 44–64 (VLMF…APFM).

Belongs to the complex I NdhL subunit family. NDH-1 can be composed of about 15 different subunits; different subcomplexes with different compositions have been identified which probably have different functions.

The protein localises to the cellular thylakoid membrane. The catalysed reaction is a plastoquinone + NADH + (n+1) H(+)(in) = a plastoquinol + NAD(+) + n H(+)(out). It carries out the reaction a plastoquinone + NADPH + (n+1) H(+)(in) = a plastoquinol + NADP(+) + n H(+)(out). In terms of biological role, NDH-1 shuttles electrons from an unknown electron donor, via FMN and iron-sulfur (Fe-S) centers, to quinones in the respiratory and/or the photosynthetic chain. The immediate electron acceptor for the enzyme in this species is believed to be plastoquinone. Couples the redox reaction to proton translocation, and thus conserves the redox energy in a proton gradient. Cyanobacterial NDH-1 also plays a role in inorganic carbon-concentration. The sequence is that of NAD(P)H-quinone oxidoreductase subunit L from Synechococcus sp. (strain JA-2-3B'a(2-13)) (Cyanobacteria bacterium Yellowstone B-Prime).